The primary structure comprises 1059 residues: Carbamoyl phosphate synthase large chain (1059 aa).

Positions 1 to 401 (MPKRTDIKKI…SLLKACRSLE (401 aa)) are carboxyphosphate synthetic domain. The ATP site is built by Arg-129, Arg-169, Gly-175, Gly-176, Arg-208, Ile-210, Glu-215, Gly-241, Ile-242, His-243, Gln-284, and Glu-298. An ATP-grasp 1 domain is found at 133-327 (KQLMEDLEQP…IAKLAAKIAV (195 aa)). 3 residues coordinate Mg(2+): Gln-284, Glu-298, and Asn-300. Residues Gln-284, Glu-298, and Asn-300 each coordinate Mn(2+). The tract at residues 402 to 546 (IGVYHNEMPE…YSTYEWENES (145 aa)) is oligomerization domain. The segment at 547 to 929 (IKSEKESVIV…ALYKAFEASY (383 aa)) is carbamoyl phosphate synthetic domain. Positions 671–861 (EQALKDLNIP…MAQIATKLIL (191 aa)) constitute an ATP-grasp 2 domain. Arg-707, Ser-746, Leu-748, Glu-752, Gly-777, Val-778, His-779, Ser-780, Gln-820, and Glu-832 together coordinate ATP. Positions 820, 832, and 834 each coordinate Mg(2+). The Mn(2+) site is built by Gln-820, Glu-832, and Asn-834. Residues 930–1059 (FHLPAFGNVI…ESRGFITQAI (130 aa)) enclose the MGS-like domain. The tract at residues 930-1059 (FHLPAFGNVI…ESRGFITQAI (130 aa)) is allosteric domain.

The protein belongs to the CarB family. Composed of two chains; the small (or glutamine) chain promotes the hydrolysis of glutamine to ammonia, which is used by the large (or ammonia) chain to synthesize carbamoyl phosphate. Tetramer of heterodimers (alpha,beta)4. It depends on Mg(2+) as a cofactor. Requires Mn(2+) as cofactor.

It catalyses the reaction hydrogencarbonate + L-glutamine + 2 ATP + H2O = carbamoyl phosphate + L-glutamate + 2 ADP + phosphate + 2 H(+). The enzyme catalyses hydrogencarbonate + NH4(+) + 2 ATP = carbamoyl phosphate + 2 ADP + phosphate + 2 H(+). Its pathway is amino-acid biosynthesis; L-arginine biosynthesis; carbamoyl phosphate from bicarbonate: step 1/1. The protein operates within pyrimidine metabolism; UMP biosynthesis via de novo pathway; (S)-dihydroorotate from bicarbonate: step 1/3. Functionally, large subunit of the glutamine-dependent carbamoyl phosphate synthetase (CPSase). CPSase catalyzes the formation of carbamoyl phosphate from the ammonia moiety of glutamine, carbonate, and phosphate donated by ATP, constituting the first step of 2 biosynthetic pathways, one leading to arginine and/or urea and the other to pyrimidine nucleotides. The large subunit (synthetase) binds the substrates ammonia (free or transferred from glutamine from the small subunit), hydrogencarbonate and ATP and carries out an ATP-coupled ligase reaction, activating hydrogencarbonate by forming carboxy phosphate which reacts with ammonia to form carbamoyl phosphate. The chain is Carbamoyl phosphate synthase large chain from Streptococcus mutans serotype c (strain ATCC 700610 / UA159).